The following is a 135-amino-acid chain: MADNFNFELVSPERLLLSEMVTEVVVPATEGEMTVMANHAPTMTTIKPGVVSVRSASGKKQDYVVFGGFADILPTGCTLLAESAVPVEELHKDELTRRIEAARKELEHAELHEHKSRLEHFIMELTHLRGIVQQD.

It belongs to the ATPase epsilon chain family. As to quaternary structure, F-type ATPases have 2 components, CF(1) - the catalytic core - and CF(0) - the membrane proton channel. CF(1) has five subunits: alpha(3), beta(3), gamma(1), delta(1), epsilon(1). CF(0) has three main subunits: a, b and c.

It localises to the cell inner membrane. Functionally, produces ATP from ADP in the presence of a proton gradient across the membrane. This Rhizobium etli (strain ATCC 51251 / DSM 11541 / JCM 21823 / NBRC 15573 / CFN 42) protein is ATP synthase epsilon chain.